Consider the following 284-residue polypeptide: BES1/BZR1 homolog protein 3 (284 aa).

Disordered stretches follow at residues 1 to 21 and 85 to 116; these read MTSG…RRER and GSTS…PSPT. The tract at residues 6–88 is required for DNA-binding; that stretch reads RTPTWKEREN…RMDLMNGSTS (83 aa). Residues 85-97 show a composition bias toward polar residues; the sequence is GSTSASPCSSYQH. Low complexity predominate over residues 98 to 114; it reads SPRASYNPSPSSSSFPS. The residue at position 153 (T153) is a Phosphothreonine.

This sequence belongs to the BZR/LAT61 family. Phosphorylated. Phosphorylation increases protein degradation.

The sequence is that of BES1/BZR1 homolog protein 3 (BEH3) from Arabidopsis thaliana (Mouse-ear cress).